The sequence spans 512 residues: MAPSHPAFQFWIHLYLWCLLLMPAVLAQQGSHTHAEDRLFKHLFGGYNRWARPVPNTSDVVIVRFGLSIAQLIDVDEKNQMMTTNVWLKQEWNDYKLRWDPAEFGNITSLRVPSEMIWIPDIVLYNNADGEFAVTHMTKAHLFFTGTVHWVPPAIYKSSCSIDVTFFPFDQQNCKMKFGSWTYDKAKIDLEQMERTVDLKDYWESGEWAIINATGTYNSKKYDCCAEIYPDVTYYFVIRRLPLFYTINLIIPCLLISCLTVLVFYLPSECGEKITLCISVLLSLTVFLLLITEIIPSTSLVIPLIGEYLLFTMIFVTLSIVITVFVLNVHHRSPSTHNMPNWVRVALLGRVPRWLMMNRPLPPMELHGSPGLKLSPTYHWLETNMDAEEREETEEEEEEEEDENICMCAGLPDSSMGVLYGHGSLHLRAMGPEAKTPSQASEILLSPQIQKALEGVHYIADHLRSEDADSSVKEDWKYVAMVVDRIFLWLFIIVCFLGTIGLFLPPFLAGMI.

An N-terminal signal peptide occupies residues 1 to 27 (MAPSHPAFQFWIHLYLWCLLLMPAVLA). The Extracellular segment spans residues 28–241 (QQGSHTHAED…VTYYFVIRRL (214 aa)). N-linked (GlcNAc...) asparagine glycosylation is found at N56 and N106. C160 and C174 form a disulfide bridge. N212 carries N-linked (GlcNAc...) asparagine glycosylation. Residues C224 and C225 are joined by a disulfide bond. The next 3 helical transmembrane spans lie at 242–266 (PLFYTINLIIPCLLISCLTVLVFYL), 274–292 (ITLCISVLLSLTVFLLLIT), and 308–329 (YLLFTMIFVTLSIVITVFVLNV). Residues 330-485 (HHRSPSTHNM…WKYVAMVVDR (156 aa)) lie on the Cytoplasmic side of the membrane. A helical transmembrane segment spans residues 486 to 504 (IFLWLFIIVCFLGTIGLFL).

It belongs to the ligand-gated ion channel (TC 1.A.9) family. Acetylcholine receptor (TC 1.A.9.1) subfamily. Alpha-2/CHRNA2 sub-subfamily. Neuronal AChR is composed of two different types of subunits: alpha and non-alpha (beta). CHRNA2/alpha-2 subunit can be combined to CHRNB2/beta-2 or CHRNB4/beta-4 to give rise to functional receptors. Both CHRNA2:CHRNB2 and CHRNA2:CHRNB4 nAChR complexes are heteropentamers with two subtypes: LS (low agonist sensitivity) with a (CHRNA2)3:(CHRNB2/4)2 and HS (high agonist sensitivity) with a (CHRNA2)2:(CHRNB2/4)3 stoichiometries; the subtypes differ in their subunit binding interfaces which are involved in ligand binding.

It localises to the synaptic cell membrane. Its subcellular location is the cell membrane. The catalysed reaction is Ca(2+)(in) = Ca(2+)(out). The enzyme catalyses K(+)(in) = K(+)(out). It catalyses the reaction Na(+)(in) = Na(+)(out). Its function is as follows. Component of neuronal acetylcholine receptors (nAChRs) that function as pentameric, ligand-gated cation channels with high calcium permeability among other activities. nAChRs are excitatory neurotrasnmitter receptors formed by a collection of nAChR subunits known to mediate synaptic transmission in the nervous system and the neuromuscular junction. Each nAchR subunit confers differential attributes to channel properties, including activation, deactivation and desensitization kinetics, pH sensitivity, cation permeability, and binding to allosteric modulators. CHRNA2 forms heteropentameric neuronal acetylcholine receptors with CHRNB2 and CHRNB4 and plays a role in nicotine dependence. This is Neuronal acetylcholine receptor subunit alpha-2 (Chrna2) from Mus musculus (Mouse).